A 252-amino-acid polypeptide reads, in one-letter code: Triosephosphate isomerase (252 aa).

A substrate-binding site is contributed by 10–12 (NWK). Residue H96 is the Electrophile of the active site. E168 functions as the Proton acceptor in the catalytic mechanism. Residues G174, S213, and 234–235 (GG) each bind substrate.

The protein belongs to the triosephosphate isomerase family. In terms of assembly, homodimer.

Its subcellular location is the cytoplasm. The catalysed reaction is D-glyceraldehyde 3-phosphate = dihydroxyacetone phosphate. It participates in carbohydrate biosynthesis; gluconeogenesis. Its pathway is carbohydrate degradation; glycolysis; D-glyceraldehyde 3-phosphate from glycerone phosphate: step 1/1. In terms of biological role, involved in the gluconeogenesis. Catalyzes stereospecifically the conversion of dihydroxyacetone phosphate (DHAP) to D-glyceraldehyde-3-phosphate (G3P). The polypeptide is Triosephosphate isomerase (Nitrosomonas eutropha (strain DSM 101675 / C91 / Nm57)).